Consider the following 438-residue polypeptide: 3-phosphoshikimate 1-carboxyvinyltransferase (438 aa).

The 3-phosphoshikimate site is built by Lys25, Ser26, and Arg30. Lys25 serves as a coordination point for phosphoenolpyruvate. 2 residues coordinate phosphoenolpyruvate: Gly99 and Arg128. Residues Ser173, Gln175, Asp325, and Lys352 each contribute to the 3-phosphoshikimate site. Position 175 (Gln175) interacts with phosphoenolpyruvate. Asp325 functions as the Proton acceptor in the catalytic mechanism. Positions 356 and 398 each coordinate phosphoenolpyruvate.

This sequence belongs to the EPSP synthase family. In terms of assembly, monomer.

It localises to the cytoplasm. It catalyses the reaction 3-phosphoshikimate + phosphoenolpyruvate = 5-O-(1-carboxyvinyl)-3-phosphoshikimate + phosphate. It functions in the pathway metabolic intermediate biosynthesis; chorismate biosynthesis; chorismate from D-erythrose 4-phosphate and phosphoenolpyruvate: step 6/7. Its function is as follows. Catalyzes the transfer of the enolpyruvyl moiety of phosphoenolpyruvate (PEP) to the 5-hydroxyl of shikimate-3-phosphate (S3P) to produce enolpyruvyl shikimate-3-phosphate and inorganic phosphate. The polypeptide is 3-phosphoshikimate 1-carboxyvinyltransferase (Prochlorococcus marinus subsp. pastoris (strain CCMP1986 / NIES-2087 / MED4)).